We begin with the raw amino-acid sequence, 61 residues long: MNFSRVLFFVFACLSAFAMASAAPWNPFKELERAGQRVRDAVISAAAVATVGQAAAIARGG.

An N-terminal signal peptide occupies residues 1 to 22 (MNFSRVLFFVFACLSAFAMASA). Positions 23–24 (AP) are cleaved as a propeptide — removed by a dipeptidylpeptidase. Gly60 carries the post-translational modification Glycine amide.

It belongs to the cecropin family.

It is found in the secreted. Functionally, cecropins have lytic and antibacterial activity against several Gram-positive and Gram-negative bacteria. This is Bactericidin B-5P from Manduca sexta (Tobacco hawkmoth).